The primary structure comprises 289 residues: MASGKEIRGKIKSVENTKKITKAMEMVAASKMRKAQDRMHAARPYSDKIRNIAANLSQANPEYTHPFLVKSDASKTVGFIIVTTDKGLCGGMNTNSLRIVTTKLRELEAEGKKVEAVAIGNKGLGFLNRIGARVVSHAVQIGDTPHLDKLIGPVKVMLDAYQDGKLDAVYVVYTKFINTMKQEPMMEQLLPLAVDKLKADEDSLAWDYIYEPDAQTVIDELLVRYVEALIFQAVAENLASEQSARMVAMKSASDNAGSVISELKLVYNKTRQAAITKELSEIVAGAAAV.

The protein belongs to the ATPase gamma chain family. As to quaternary structure, F-type ATPases have 2 components, CF(1) - the catalytic core - and CF(0) - the membrane proton channel. CF(1) has five subunits: alpha(3), beta(3), gamma(1), delta(1), epsilon(1). CF(0) has three main subunits: a, b and c.

Its subcellular location is the cell inner membrane. In terms of biological role, produces ATP from ADP in the presence of a proton gradient across the membrane. The gamma chain is believed to be important in regulating ATPase activity and the flow of protons through the CF(0) complex. This Janthinobacterium sp. (strain Marseille) (Minibacterium massiliensis) protein is ATP synthase gamma chain.